A 200-amino-acid chain; its full sequence is Holliday junction branch migration complex subunit RuvA (200 aa).

The segment at 1–64 (MLSYLSGTLI…EDALQLYGFI (64 aa)) is domain I. The segment at 65 to 143 (TTEDREVFKL…KLDLKIDIKE (79 aa)) is domain II. The tract at residues 144-148 (TAFRS) is flexible linker. The tract at residues 149 to 200 (DKQQVRNDAYSALISLGFTKSIAEKAMRAAIAEVPDGSVDDLIRVALRHVQS) is domain III.

This sequence belongs to the RuvA family. In terms of assembly, homotetramer. Forms an RuvA(8)-RuvB(12)-Holliday junction (HJ) complex. HJ DNA is sandwiched between 2 RuvA tetramers; dsDNA enters through RuvA and exits via RuvB. An RuvB hexamer assembles on each DNA strand where it exits the tetramer. Each RuvB hexamer is contacted by two RuvA subunits (via domain III) on 2 adjacent RuvB subunits; this complex drives branch migration. In the full resolvosome a probable DNA-RuvA(4)-RuvB(12)-RuvC(2) complex forms which resolves the HJ.

The protein resides in the cytoplasm. In terms of biological role, the RuvA-RuvB-RuvC complex processes Holliday junction (HJ) DNA during genetic recombination and DNA repair, while the RuvA-RuvB complex plays an important role in the rescue of blocked DNA replication forks via replication fork reversal (RFR). RuvA specifically binds to HJ cruciform DNA, conferring on it an open structure. The RuvB hexamer acts as an ATP-dependent pump, pulling dsDNA into and through the RuvAB complex. HJ branch migration allows RuvC to scan DNA until it finds its consensus sequence, where it cleaves and resolves the cruciform DNA. This Chloroherpeton thalassium (strain ATCC 35110 / GB-78) protein is Holliday junction branch migration complex subunit RuvA.